The primary structure comprises 110 residues: Large ribosomal subunit protein P2 (110 aa).

S59 is modified (O-(pantetheine 4'-phosphoryl)serine; in acyl carrier protein form). The tract at residues 62–110 is disordered; sequence LASVPSGGAAPAAAAGGAAAGGAAEEKAEDKPAEKDEESDDDMGFGLFD. Over residues 63–84 the composition is skewed to low complexity; that stretch reads ASVPSGGAAPAAAAGGAAAGGA. Over residues 85-95 the composition is skewed to basic and acidic residues; the sequence is AEEKAEDKPAE. S100 bears the Phosphoserine; in ribosomal stalk form mark.

It belongs to the eukaryotic ribosomal protein P1/P2 family. The phosphorylated form is part of the ribosomal stalk involved in the interaction of the elongation factors with the ribosome during protein synthesis. The phosphopantetheinylated form is part of the 10S triacylglycerol biosynthetic complex involved in de novo fatty acid biosynthesis. Post-translationally, 4'-phosphopantetheine is transferred from CoA to a specific serine by acpS. This modification is essential for activity because fatty acids are bound in thioester linkage to the sulfhydryl of the prosthetic group.

It is found in the cytoplasm. Functionally, probable bifunctional protein. The phosphorylated protein plays an important role in the elongation step of protein synthesis. The phosphopantetheinylated protein acts as an acyl carrier protein. The sequence is that of Large ribosomal subunit protein P2 from Rhodotorula glutinis (Yeast).